Reading from the N-terminus, the 152-residue chain is Acidic phospholipase A2 homolog textilotoxin D chain (152 aa).

A signal peptide spans 1–19 (MHPAHLLVLLGVCVSLLGA). Intrachain disulfides connect C38–C104, C54–C151, C56–C72, C71–C132, C78–C125, C88–C118, and C111–C123. The N-linked (GlcNAc...) asparagine glycan is linked to N112.

It belongs to the phospholipase A2 family. Group I subfamily. D49 sub-subfamily. In terms of assembly, heterohexamer. 2 forms exist: 2 A or 2 B chains, 2 C chains and 2 covalently-linked D chains, and 1 A or 1 B, 1 C, 2 covalently-linked D chains and 2 differentially glycosylated covalently-linked D chains. Textilotoxin was originally described as pentameric. Expressed by the venom gland.

It is found in the secreted. Functionally, snake venom oligomeric phospholipase A2 that has potent presynaptic neurotoxicity. Chain D is not itself neurotoxic, but it is essential for the neurotoxicity of textilotoxin. Chain D possesses a very low phospholipase activity. This is Acidic phospholipase A2 homolog textilotoxin D chain from Pseudonaja textilis (Eastern brown snake).